Consider the following 62-residue polypeptide: Chromatin protein Cren7 (62 aa).

This sequence belongs to the Cren7 family. As to quaternary structure, monomer. Methylated at multiple sites, to varying extents.

Its subcellular location is the chromosome. The protein localises to the cytoplasm. In terms of biological role, a chromatin protein, binds double-stranded DNA without sequence specificity. Constrains negative DNA supercoils. The polypeptide is Chromatin protein Cren7 (Staphylothermus marinus (strain ATCC 43588 / DSM 3639 / JCM 9404 / F1)).